Here is a 1007-residue protein sequence, read N- to C-terminus: SUPPRESSOR OF ABI3-5 (1007 aa).

Disordered stretches follow at residues 1–185 (MDPS…RDRE) and 204–269 (ESPH…FSAT). 4 stretches are compositionally biased toward basic and acidic residues: residues 40 to 49 (PDERLMRDDV), 94 to 120 (YYHD…RYDG), 138 to 185 (HSRD…RDRE), and 204 to 214 (ESPHKRYEKSR). A compositionally biased stretch (basic residues) spans 227–236 (RSPRGRSHGR). Positions 237–264 (SYREDSYEGDHWNESERRREYEDRHNQD) are enriched in basic and acidic residues. The region spanning 272–352 (ATVVVKGLSM…RKLMFHYSQP (81 aa)) is the RRM 1 domain. The segment at 378-407 (VPTDWICTICGCINFARRTSCFQCNEPKTK) adopts a RanBP2-type zinc-finger fold. In terms of domain architecture, RRM 2 spans 432–512 (HVLVVRGLDE…KILRVAYAKS (81 aa)). Disordered stretches follow at residues 556–581 (GEKQ…SAPQ), 631–656 (PDQN…SQQK), 725–755 (HETQ…STGQ), 771–797 (STSN…TLMG), 810–910 (ASSS…GITT), and 945–977 (SGLG…KKVD). Residues 631 to 645 (PDQNNESKVTENQPD) are compositionally biased toward polar residues. Composition is skewed to low complexity over residues 778-793 (SALT…TTGG) and 823-835 (PSAS…VSGS). The span at 849 to 867 (THREQPQTSYRDRAAERRN) shows a compositional bias: basic and acidic residues. Residues 928–974 (ESNVGNRMLRNMGWHEGSGLGKDGSGMKEPVQAQGVDRRAGLGSQQK) form the G-patch domain.

In terms of assembly, interacts with the pre-spliceosomal component U2AF65A. In terms of tissue distribution, ubiquitous with highest expression in siliques toward the end of seed maturation.

The protein localises to the nucleus. In terms of biological role, splicing factor that controls alternative splicing of the developmental regulator ABI3. Reduces splicing of a cryptic intron in ABI3, leading to a decreased in ABI3-beta transcript. Regulates the splicing of the receptor-like kinase SNC4/LRKL-2.6. The polypeptide is SUPPRESSOR OF ABI3-5 (Arabidopsis thaliana (Mouse-ear cress)).